The following is a 436-amino-acid chain: EPS I polysaccharide export inner membrane protein EpsE (436 aa).

12 consecutive transmembrane segments (helical) span residues 20-40, 49-69, 91-111, 133-153, 160-180, 185-205, 234-254, 261-281, 307-327, 341-361, 375-395, and 396-416; these read VLGL…NILL, FGLF…LATG, LCAF…ALYL, AAIV…QYAM, ATIS…MGPI, LALT…LLVL, VLTT…LAAM, LALF…PATL, ALLF…LLAG, AASS…SVLL, FAMA…ALRL, and GFGA…LILF.

It to E.coli bicyclomycin resistance protein (BCR).

The protein resides in the cell inner membrane. Functionally, probably involved in polymerization and/or export of exopolysaccharide EPS I which functions as a virulence factor. May play a role in export of EPS I or its intermediates across the membranes. The protein is EPS I polysaccharide export inner membrane protein EpsE (epsE) of Ralstonia solanacearum (Pseudomonas solanacearum).